The sequence spans 410 residues: Regulator of microtubule dynamics protein 2 (410 aa).

Residues leucine 9 to histidine 28 traverse the membrane as a helical segment. A Phosphoserine modification is found at serine 51. Positions phenylalanine 68–glutamate 110 form a coiled coil. A Phosphoserine modification is found at serine 121. Basic residues predominate over residues proline 122 to leucine 131. A disordered region spans residues proline 122 to phenylalanine 164. Threonine 139 is subject to Phosphothreonine. Tyrosine 152 carries the post-translational modification Phosphotyrosine. Phosphothreonine is present on residues threonine 154 and threonine 157.

It belongs to the RMDN family. As to quaternary structure, interacts with microtubules.

The protein resides in the membrane. It is found in the cytoplasm. The protein localises to the cytoskeleton. Its subcellular location is the spindle. It localises to the spindle pole. This is Regulator of microtubule dynamics protein 2 (RMDN2) from Homo sapiens (Human).